Reading from the N-terminus, the 176-residue chain is NAD(P)H-quinone oxidoreductase subunit 6, chloroplastic (176 aa).

5 helical membrane passes run 10–30 (FLLV…VLLP), 32–52 (PIFS…LYIL), 61–81 (AQLL…VMFM), 92–112 (LWTV…FSLI), and 152–172 (FFLP…GAIS).

This sequence belongs to the complex I subunit 6 family. As to quaternary structure, NDH is composed of at least 16 different subunits, 5 of which are encoded in the nucleus.

It is found in the plastid. The protein localises to the chloroplast thylakoid membrane. It catalyses the reaction a plastoquinone + NADH + (n+1) H(+)(in) = a plastoquinol + NAD(+) + n H(+)(out). It carries out the reaction a plastoquinone + NADPH + (n+1) H(+)(in) = a plastoquinol + NADP(+) + n H(+)(out). NDH shuttles electrons from NAD(P)H:plastoquinone, via FMN and iron-sulfur (Fe-S) centers, to quinones in the photosynthetic chain and possibly in a chloroplast respiratory chain. The immediate electron acceptor for the enzyme in this species is believed to be plastoquinone. Couples the redox reaction to proton translocation, and thus conserves the redox energy in a proton gradient. The polypeptide is NAD(P)H-quinone oxidoreductase subunit 6, chloroplastic (ndhG) (Lobularia maritima (Sweet alyssum)).